Consider the following 822-residue polypeptide: LPS-assembly protein LptD (822 aa).

The first 37 residues, 1-37 (MRRASRSPFILSPVAHAVSRLVLCATLGWTYAGSGHA), serve as a signal peptide directing secretion. The disordered stretch occupies residues 38–97 (QVPAPAGGSEVPLGARPPASAPVAAQQETPLKLKSSPALAEEVPNGPGDEGPTFVFGDSV).

This sequence belongs to the LptD family. Component of the lipopolysaccharide transport and assembly complex. Interacts with LptE and LptA.

The protein localises to the cell outer membrane. Functionally, together with LptE, is involved in the assembly of lipopolysaccharide (LPS) at the surface of the outer membrane. The polypeptide is LPS-assembly protein LptD (Polaromonas sp. (strain JS666 / ATCC BAA-500)).